The chain runs to 263 residues: 4-hydroxy-2-oxo-heptane-1,7-dioate aldolase (263 aa).

H45 functions as the Proton acceptor in the catalytic mechanism. Q147 serves as a coordination point for substrate. A divalent metal cation is bound at residue E149. The substrate site is built by A174 and D175. An a divalent metal cation-binding site is contributed by D175.

It belongs to the HpcH/HpaI aldolase family. As to quaternary structure, homohexamer; trimer of dimers. The cofactor is a divalent metal cation.

It catalyses the reaction 4-hydroxy-2-oxoheptanedioate = succinate semialdehyde + pyruvate. It participates in aromatic compound metabolism; 4-hydroxyphenylacetate degradation; pyruvate and succinate semialdehyde from 4-hydroxyphenylacetate: step 7/7. Its function is as follows. Catalyzes the reversible retro-aldol cleavage of 4-hydroxy-2-ketoheptane-1,7-dioate (HKHD) to pyruvate and succinic semialdehyde. This is 4-hydroxy-2-oxo-heptane-1,7-dioate aldolase from Salmonella typhimurium (strain LT2 / SGSC1412 / ATCC 700720).